Consider the following 240-residue polypeptide: MIIAANLKTNLTREKTAKYIKEVESFLNQHNISQEVFVFPAISNLISSSANVVVGAQNAYPTQNGAFTGEIGNEQLEEFGIKTILIGHSERRHVIGETQDSLIVKFNFYKNLGFKIIYCVGEPLHIREMGHEKMMEYISAQYVGIDAAYENLIIAYEPVWAIGTGLTPTLEDIKMIHKELKAKSTAPLLYGGSVKVTNVEEVLALDGVDGVLVGSAALYVEHFCTMCEYAQNIDKKNKKL.

Residue asparagine 6–lysine 8 coordinates substrate. Histidine 88 serves as the catalytic Electrophile. Catalysis depends on glutamate 157, which acts as the Proton acceptor. Residues glycine 163 and serine 193 each contribute to the substrate site.

It belongs to the triosephosphate isomerase family. Homodimer.

The protein localises to the cytoplasm. The catalysed reaction is D-glyceraldehyde 3-phosphate = dihydroxyacetone phosphate. It participates in carbohydrate biosynthesis; gluconeogenesis. Its pathway is carbohydrate degradation; glycolysis; D-glyceraldehyde 3-phosphate from glycerone phosphate: step 1/1. In terms of biological role, involved in the gluconeogenesis. Catalyzes stereospecifically the conversion of dihydroxyacetone phosphate (DHAP) to D-glyceraldehyde-3-phosphate (G3P). The polypeptide is Triosephosphate isomerase (Sulfurimonas denitrificans (strain ATCC 33889 / DSM 1251) (Thiomicrospira denitrificans (strain ATCC 33889 / DSM 1251))).